The sequence spans 240 residues: Probable xyloglucan-specific endo-beta-1,4-glucanase A (240 aa).

A signal peptide spans 1–15 (MKFLTPLVLSSLASA).

This sequence belongs to the glycosyl hydrolase 12 (cellulase H) family.

The protein resides in the secreted. It catalyses the reaction xyloglucan + H2O = xyloglucan oligosaccharides.. Catalyzes endohydrolysis of 1,4-beta-D-glucosidic linkages in xyloglucan with retention of the beta-configuration of the glycosyl residues. Specific for xyloglucan and does not hydrolyze other cell wall components. This is Probable xyloglucan-specific endo-beta-1,4-glucanase A (xgeA) from Aspergillus oryzae (strain ATCC 42149 / RIB 40) (Yellow koji mold).